A 202-amino-acid chain; its full sequence is Odorant-binding protein 59a (202 aa).

Residues 1–20 (MKQLIFLLICLSCGTCSIYA) form the signal peptide. Over residues 43 to 53 (HRQDEDEDRGR) the composition is skewed to basic and acidic residues. Residues 43-105 (HRQDEDEDRG…QSDGRNHTSN (63 aa)) form a disordered region. Gly residues predominate over residues 54 to 65 (GGQGRQGNGYEY).

This sequence belongs to the PBP/GOBP family. In terms of tissue distribution, expressed in non-neuronal cells in hygrosensitive sensilla in the second chamber of the sacculus of the antenna third segment (at protein level).

It localises to the secreted. In terms of biological role, odorant-binding protein required for hygrotaxis behavior in humidity-detecting sensilla. The chain is Odorant-binding protein 59a from Drosophila melanogaster (Fruit fly).